The primary structure comprises 295 residues: Xyloglucan endotransglucosylase protein 2 (295 aa).

A signal peptide spans 1-23 (MAMGTHFGGLWLALLCMVSATMG). The 199-residue stretch at 24–222 (AVPRKPVDVP…WSKAPFVASY (199 aa)) folds into the GH16 domain. The active-site Nucleophile is the Glu108. Residue Glu112 is the Proton donor of the active site. Glu112 is a binding site for xyloglucan. An N-linked (GlcNAc...) asparagine glycan is attached at Asn116. Xyloglucan contacts are provided by residues 125–127 (QTN), 135–137 (DRE), 201–202 (DW), and Gly206. 2 disulfides stabilise this stretch: Cys230–Cys239 and Cys276–Cys289. Arg281 contributes to the xyloglucan binding site.

It belongs to the glycosyl hydrolase 16 family. XTH group 1 subfamily. Post-translationally, contains at least one intrachain disulfide bond essential for its enzymatic activity. In terms of tissue distribution, expressed in fruit pulp.

The protein resides in the secreted. It is found in the cell wall. It localises to the extracellular space. Its subcellular location is the apoplast. It carries out the reaction breaks a beta-(1-&gt;4) bond in the backbone of a xyloglucan and transfers the xyloglucanyl segment on to O-4 of the non-reducing terminal glucose residue of an acceptor, which can be a xyloglucan or an oligosaccharide of xyloglucan.. Functionally, catalyzes xyloglucan endotransglycosylation (XET). Cleaves and religates xyloglucan polymers. Does not catalyze xyloglucan endohydrolysis (XEH). Probably involved in cell wall restructuring during fruit ripening and postharvest fruit softening. This Diospyros kaki (Kaki persimmon) protein is Xyloglucan endotransglucosylase protein 2.